The following is a 350-amino-acid chain: Protein RecA (350 aa).

67–74 contacts ATP; sequence GPESSGKT.

Belongs to the RecA family.

The protein localises to the cytoplasm. Its function is as follows. Can catalyze the hydrolysis of ATP in the presence of single-stranded DNA, the ATP-dependent uptake of single-stranded DNA by duplex DNA, and the ATP-dependent hybridization of homologous single-stranded DNAs. It interacts with LexA causing its activation and leading to its autocatalytic cleavage. The polypeptide is Protein RecA (Baumannia cicadellinicola subsp. Homalodisca coagulata).